A 429-amino-acid chain; its full sequence is 3-phosphoshikimate 1-carboxyvinyltransferase (429 aa).

3-phosphoshikimate is bound by residues Lys-11, Ser-12, and Arg-16. Residue Lys-11 coordinates phosphoenolpyruvate. Phosphoenolpyruvate is bound by residues Gly-82 and Arg-110. 4 residues coordinate 3-phosphoshikimate: Ser-155, Gln-157, Asp-302, and Lys-329. Gln-157 is a phosphoenolpyruvate binding site. The active-site Proton acceptor is the Asp-302. Positions 333 and 385 each coordinate phosphoenolpyruvate.

It belongs to the EPSP synthase family. Monomer.

The protein resides in the cytoplasm. The enzyme catalyses 3-phosphoshikimate + phosphoenolpyruvate = 5-O-(1-carboxyvinyl)-3-phosphoshikimate + phosphate. It participates in metabolic intermediate biosynthesis; chorismate biosynthesis; chorismate from D-erythrose 4-phosphate and phosphoenolpyruvate: step 6/7. Catalyzes the transfer of the enolpyruvyl moiety of phosphoenolpyruvate (PEP) to the 5-hydroxyl of shikimate-3-phosphate (S3P) to produce enolpyruvyl shikimate-3-phosphate and inorganic phosphate. In Helicobacter pylori (strain ATCC 700392 / 26695) (Campylobacter pylori), this protein is 3-phosphoshikimate 1-carboxyvinyltransferase.